The sequence spans 185 residues: A-type ATP synthase subunit E (185 aa).

This sequence belongs to the V-ATPase E subunit family. As to quaternary structure, has multiple subunits with at least A(3), B(3), C, D, E, F, H, I and proteolipid K(x).

The protein resides in the cell membrane. Component of the A-type ATP synthase that produces ATP from ADP in the presence of a proton gradient across the membrane. The protein is A-type ATP synthase subunit E of Thermoplasma volcanium (strain ATCC 51530 / DSM 4299 / JCM 9571 / NBRC 15438 / GSS1).